Consider the following 295-residue polypeptide: Acetylglutamate kinase (295 aa).

Substrate contacts are provided by residues 66–67, R88, and N193; that span reads GG.

This sequence belongs to the acetylglutamate kinase family. ArgB subfamily.

It localises to the cytoplasm. The enzyme catalyses N-acetyl-L-glutamate + ATP = N-acetyl-L-glutamyl 5-phosphate + ADP. The protein operates within amino-acid biosynthesis; L-arginine biosynthesis; N(2)-acetyl-L-ornithine from L-glutamate: step 2/4. Catalyzes the ATP-dependent phosphorylation of N-acetyl-L-glutamate. This is Acetylglutamate kinase from Rhizobium rhizogenes (strain K84 / ATCC BAA-868) (Agrobacterium radiobacter).